Consider the following 636-residue polypeptide: Chaperone protein DnaK (636 aa).

A Phosphothreonine; by autocatalysis modification is found at Thr-197. Positions Leu-596–Gly-607 are enriched in low complexity. A disordered region spans residues Leu-596 to Arg-636. Over residues Ser-613 to Arg-636 the composition is skewed to acidic residues.

This sequence belongs to the heat shock protein 70 family.

Its function is as follows. Acts as a chaperone. The chain is Chaperone protein DnaK from Rubrobacter xylanophilus (strain DSM 9941 / JCM 11954 / NBRC 16129 / PRD-1).